The chain runs to 288 residues: Bifunctional protein FolD (288 aa).

NADP(+) contacts are provided by residues 166 to 168 and Ile232; that span reads GAS.

The protein belongs to the tetrahydrofolate dehydrogenase/cyclohydrolase family. In terms of assembly, homodimer.

The enzyme catalyses (6R)-5,10-methylene-5,6,7,8-tetrahydrofolate + NADP(+) = (6R)-5,10-methenyltetrahydrofolate + NADPH. The catalysed reaction is (6R)-5,10-methenyltetrahydrofolate + H2O = (6R)-10-formyltetrahydrofolate + H(+). Its pathway is one-carbon metabolism; tetrahydrofolate interconversion. Its function is as follows. Catalyzes the oxidation of 5,10-methylenetetrahydrofolate to 5,10-methenyltetrahydrofolate and then the hydrolysis of 5,10-methenyltetrahydrofolate to 10-formyltetrahydrofolate. The chain is Bifunctional protein FolD from Escherichia coli (strain UTI89 / UPEC).